A 419-amino-acid polypeptide reads, in one-letter code: LWamide neuropeptides (419 aa).

The signal sequence occupies residues methionine 1–alanine 27. A disordered region spans residues alanine 27 to asparagine 48. Residues lysine 28–glutamine 104 constitute a propeptide that is removed on maturation. A Tryptophan amide modification is found at tryptophan 110. Positions glutamate 113 to alanine 140 are excised as a propeptide. Positions arginine 120–glutamine 132 are enriched in basic and acidic residues. Residues arginine 120–aspartate 332 form a disordered region. Position 146 is a tryptophan amide (tryptophan 146). Residues aspartate 149–alanine 150 constitute a propeptide that is removed on maturation. Position 156 is a tryptophan amide (tryptophan 156). Positions aspartate 159–alanine 160 are excised as a propeptide. Tryptophan 166 is subject to Tryptophan amide. Positions aspartate 169–alanine 170 are excised as a propeptide. Tryptophan 176 carries the tryptophan amide modification. Positions aspartate 179–alanine 180 are excised as a propeptide. Tryptophan 186 is modified (tryptophan amide). The propeptide occupies aspartate 189–alanine 190. Tryptophan 196 carries the tryptophan amide modification. Positions aspartate 199–alanine 200 are excised as a propeptide. Tryptophan amide is present on tryptophan 206. Positions aspartate 209 to alanine 210 are excised as a propeptide. Tryptophan 216 carries the tryptophan amide modification. The propeptide at glycine 218–alanine 220 is seems to have a sequencing error or a mutation in position 218; Gly instead of Arg. Residue tryptophan 226 is modified to Tryptophan amide. The propeptide occupies aspartate 229–alanine 230. Position 236 is a tryptophan amide (tryptophan 236). Positions aspartate 239–alanine 240 are excised as a propeptide. A Tryptophan amide modification is found at tryptophan 246. A propeptide spanning residues aspartate 249–alanine 250 is cleaved from the precursor. Tryptophan 256 is modified (tryptophan amide). A propeptide spanning residues aspartate 259 to alanine 260 is cleaved from the precursor. Tryptophan amide is present on tryptophan 266. The propeptide occupies aspartate 269–alanine 270. Residue tryptophan 276 is modified to Tryptophan amide. Positions aspartate 279–threonine 280 are excised as a propeptide. At tryptophan 286 the chain carries Tryptophan amide. Positions aspartate 289–alanine 290 are excised as a propeptide. Tryptophan 296 is modified (tryptophan amide). 2 consecutive propeptides follow at residues aspartate 299 to alanine 300 and aspartate 309 to alanine 320. Tryptophan 326 is subject to Tryptophan amide. The propeptide occupies glutamine 329 to phenylalanine 419.

The protein belongs to the LWamide neuropeptide family. In terms of tissue distribution, in planula larvae, expressed in a narrow ring of ectodermal neurosensory cells around the widest circumference at the anterior of the larvae. In primary polyps, expression is confined to endodermal cells of the hypostome. In mature polyps, expression is strong in the epidermis from the tentacle level to the base of the polyp and weak in the gastrodermal cells in the apical hypostome.

The protein localises to the secreted. Functionally, LWamide peptides may be involved in induction of metamorphosis. The protein is LWamide neuropeptides of Hydractinia echinata (Snail fur).